Here is a 377-residue protein sequence, read N- to C-terminus: Delta(12) fatty acid desaturase DES8.11 (377 aa).

2 consecutive transmembrane segments (helical) span residues 55–75 (LIVAYVFYYLANTYIPLIPTP) and 79–99 (LAWPVYWFCQASILTGLWVIG). The Histidine box-1 signature appears at 100–104 (HECGH). Residues 112–132 (LIDDIVGFVLHSALLTPYFSW) traverse the membrane as a helical segment. The Histidine box-2 motif lies at 136 to 140 (HRNHH). 3 helical membrane-spanning segments follow: residues 174–194 (VFTLVFRLTLGFPLYLLTNIS), 220–240 (VLLSDFGLLAVFYAIKLLVAA), and 244–264 (AWVINMYAIPVLGVSVFFVLI). The Histidine box-3 signature appears at 310–314 (HVLHH).

It belongs to the fatty acid desaturase type 1 family.

The protein localises to the membrane. Its pathway is lipid metabolism; polyunsaturated fatty acid biosynthesis. Its function is as follows. Converts linoleic acid into a conjugated octadecatrienoic acid, probably calendic acid. The sequence is that of Delta(12) fatty acid desaturase DES8.11 from Calendula officinalis (Pot marigold).